Here is a 663-residue protein sequence, read N- to C-terminus: Cytochrome bo(3) ubiquinol oxidase subunit 1 (663 aa).

At 1–16 (MFGKLSLDAVPFHEPI) the chain is on the periplasmic side. Residues 17–35 (VMVTIAGIILGGLALVGLI) traverse the membrane as a helical segment. Topologically, residues 36–52 (TYFGKWTYLWKEWLTSV) are cytoplasmic. Residues 53–80 (DHKRLGIMYIIVAIVMLLRGFADAIMMR) traverse the membrane as a helical segment. Residues R71 and D75 each coordinate ubiquinone-8. At 81 to 95 (SQQALASAGEAGFLP) the chain is on the periplasmic side. Residues 96 to 132 (PHHYDQIFTAHGVIMIFFVAMPFVIGLMNLVVPLQIG) form a helical membrane-spanning segment. H98 serves as a coordination point for ubiquinone-8. A heme b-binding site is contributed by H106. The Cytoplasmic portion of the chain corresponds to 133 to 137 (ARDVA). The helical transmembrane segment at 138–161 (FPFLNNLSFWFTVVGVILVNVSLG) threads the bilayer. Residues 162–184 (VGEFAQTGWLAYPPLSGIEYSPG) lie on the Periplasmic side of the membrane. Residue W170 coordinates heme b. Residues 185 to 215 (VGVDYWIWSLQLSGIGTTLTGINFFVTILKM) traverse the membrane as a helical segment. Residues 216–224 (RAPGMTMFK) are Cytoplasmic-facing. Residues 225 to 260 (MPVFTWASLCANVLIIASFPILTVTVALLTLDRYLG) form a helical membrane-spanning segment. The Periplasmic portion of the chain corresponds to 261–270 (THFFTNDMGG). The helical transmembrane segment at 271–307 (NMMMYINLIWAWGHPEVYILILPVFGVFSEIAATFSR) threads the bilayer. H284 is a Cu(2+) binding site. The 1'-histidyl-3'-tyrosine (His-Tyr) cross-link spans 284 to 288 (HPEVY). Y288 is a binding site for Fe(II)-heme o. Residues 308–311 (KRLF) are Cytoplasmic-facing. Residues 312 to 326 (GYTSLVWATVCITVL) form a helical membrane-spanning segment. Over 327 to 340 (SFIVWLHHFFTMGA) the chain is Periplasmic. Cu(2+) contacts are provided by H333 and H334. Residues 341-369 (GANVNAFFGITTMIIAIPTGVKIFNWLFT) traverse the membrane as a helical segment. The Cytoplasmic portion of the chain corresponds to 370-377 (MYQGRIVF). Residues 378–409 (HSAMLWTIGFIVTFSVGGMTGVLLAVPGADFV) form a helical membrane-spanning segment. The Periplasmic portion of the chain corresponds to 410-412 (LHN). Fe(II)-heme o-binding residues include H411 and H419. Residues 413 to 445 (SLFLIAHFHNVIIGGVVFGCFAGMTYWWPKAFG) traverse the membrane as a helical segment. Residue H421 participates in heme b binding. At 446 to 448 (FKL) the chain is on the cytoplasmic side. Residues 449-477 (NETWGKRAFWFWIIGFFVAFMPLYALGFM) traverse the membrane as a helical segment. The Periplasmic portion of the chain corresponds to 478 to 489 (GMTRRLSQQIDP). R481 and R482 together coordinate heme b. A helical membrane pass occupies residues 490-521 (QFHTMLMIAASGAVLIALGILCLVIQMYVSIR). Over 522-587 (DRDQNRDLTG…DHYEEIHMPK (66 aa)) the chain is Cytoplasmic. The chain crosses the membrane as a helical span at residues 588 to 606 (NSGAGIVIAAFSTIFGFAM). Residues 607–613 (IWHIWWL) are Periplasmic-facing. Residues 614-632 (AIVGFAGMIITWIVKSFDE) form a helical membrane-spanning segment. Over 633-663 (DVDYYVPVAEIEKLENQHFDEITKAGLKNGN) the chain is Cytoplasmic.

Belongs to the heme-copper respiratory oxidase family. As to quaternary structure, the cytochrome bo(3) ubiquinol oxidase complex is a heterooctamer of two A chains, two B chains, two C chains and two D chains. Cu(2+) serves as cofactor. Heme b is required as a cofactor. The cofactor is Fe(II)-heme o.

The protein localises to the cell inner membrane. The catalysed reaction is 2 a ubiquinol + O2 + n H(+)(in) = 2 a ubiquinone + 2 H2O + n H(+)(out). Functionally, cytochrome bo(3) ubiquinol oxidase is the terminal enzyme in the aerobic respiratory chain of E.coli that predominates when cells are grown at high aeration. Catalyzes the four-electron reduction of O2 to water, using a ubiquinol as a membrane soluble electron donor for molecular oxygen reduction; ubiquinol-8 is the natural substrate for E.coli. Has proton pump activity across the membrane in addition to electron transfer, pumping 2 protons/electron and generating a proton motive force. All the redox centers of this enzyme complex are located within the largest subunit, subunit I. Protons are probably pumped via D- and K- channels found in this subunit. The polypeptide is Cytochrome bo(3) ubiquinol oxidase subunit 1 (cyoB) (Escherichia coli O157:H7).